A 346-amino-acid chain; its full sequence is Phosphoribosylformylglycinamidine cyclo-ligase (346 aa).

Belongs to the AIR synthase family.

Its subcellular location is the cytoplasm. It carries out the reaction 2-formamido-N(1)-(5-O-phospho-beta-D-ribosyl)acetamidine + ATP = 5-amino-1-(5-phospho-beta-D-ribosyl)imidazole + ADP + phosphate + H(+). It functions in the pathway purine metabolism; IMP biosynthesis via de novo pathway; 5-amino-1-(5-phospho-D-ribosyl)imidazole from N(2)-formyl-N(1)-(5-phospho-D-ribosyl)glycinamide: step 2/2. The protein is Phosphoribosylformylglycinamidine cyclo-ligase of Bacillus licheniformis (strain ATCC 14580 / DSM 13 / JCM 2505 / CCUG 7422 / NBRC 12200 / NCIMB 9375 / NCTC 10341 / NRRL NRS-1264 / Gibson 46).